The primary structure comprises 420 residues: tRNA(Ile)-lysidine synthase (420 aa).

Ser-28–Ser-33 is an ATP binding site.

Belongs to the tRNA(Ile)-lysidine synthase family.

The protein resides in the cytoplasm. It carries out the reaction cytidine(34) in tRNA(Ile2) + L-lysine + ATP = lysidine(34) in tRNA(Ile2) + AMP + diphosphate + H(+). In terms of biological role, ligates lysine onto the cytidine present at position 34 of the AUA codon-specific tRNA(Ile) that contains the anticodon CAU, in an ATP-dependent manner. Cytidine is converted to lysidine, thus changing the amino acid specificity of the tRNA from methionine to isoleucine. The polypeptide is tRNA(Ile)-lysidine synthase (Hydrogenovibrio crunogenus (strain DSM 25203 / XCL-2) (Thiomicrospira crunogena)).